An 871-amino-acid chain; its full sequence is MDQHHGARGGAPIRRPRRSIESRSHPFRATGNTQRTYSTPRLSYRDGLSGRTASRDPQEQASNQDESSNPSTSNAQQSTSFWGYLRRVFSDDVPAQPQAPRPRADFAPPAGEESSSEEEEEEGPAQAPLDEEDQLMYADQYSVGDSSDENDEEEDPRLGSDYPTSAESSEYHDHGEMVAGAGAESESETDIDAEEEEEDDEDDEDDMEVIRDESYRLPRTWLDKSIRLMDEALAQSSELSKAITKSTRSLYDSQFAPGGRGYTQTATPSRRLVQLSRAGMYDSDKIVMTGDYMEVDDDPDSAYQLWVRAIRHPLAMNPSWEETISNHTNPSFSTDIDYDIDELIEKNLARTPPVFEGLLDSAEFFYKLPMLYTYATITQDEAYEERLAWSNTQALHGHEQSSWQALLVYYSRGGMYVSPTQEPRGIWRRALKQAMALQLKMCVLGLSDVVTKQNATHHHTAVTFLVDALLRTARNCYLASRLLVFAWERRRETGAKRPAEPLIALSGVTLLQPLPPEVSELLEQRTFDIGLRTPNSAVFRAFFGSLVYWAELRLALRDPASINCRYVGFHLQTSEIYLLARAHSASPGYTKEELVAMEAILTLATLMLEVALQWVHVACAQLLSENDTIKAFRRVSASIPHALAPLGSIRLHDAEFEVLSNPDVMVARDETALSQALFLGYFSVRTALTACMRDYSHEADGGSKETVTGVFLGVGLILQRLAGHLNFLLNCLAGAALYGGQKINIHSLTLPRYSLLADVMAPMLQRQSLVDFWRARDNMLEDLEITPRPGPPTQGKRVVVEMPLPSDDLPDMTPGASVNNGAGLGRMVDMAKQLQHYRETIIGEEATSSVGKRGLIRAGVGVAALRGRRRK.

Positions 1–212 (MDQHHGARGG…DEDDMEVIRD (212 aa)) are disordered. Positions 13-33 (IRRPRRSIESRSHPFRATGNT) match the Nuclear localization signal motif. 2 stretches are compositionally biased toward polar residues: residues 30-41 (TGNTQRTYSTPR) and 59-81 (EQAS…STSF). Acidic residues-rich tracts occupy residues 114–134 (SSSE…EEDQ), 146–155 (SSDENDEEED), and 185–207 (SESE…EDDM).

Belongs to the alphaherpesvirinae HHV-1 UL47 family. As to quaternary structure, interacts with US3 kinase. Interacts with UL31 and UL34; these interactions seem important for efficient virion nuclear egress. Interacts with UL41/VHS. In terms of processing, phosphorylated by US3. This phosphorylation is required for proper nuclear localization.

The protein resides in the virion tegument. Its subcellular location is the host nucleus. It localises to the host cytoplasm. Its function is as follows. Tegument protein that can bind to various RNA transcripts. Plays a role in the attenuation of selective viral and cellular mRNA degradation by modulating the activity of host shutoff RNase UL41/VHS. Also plays a role in the primary envelopment of virions in the perinuclear space, probably by interacting with two nuclear egress proteins UL31 and UL34. This chain is Tegument protein UL47 homolog, found in Equine herpesvirus 1 (strain V592) (EHV-1).